The primary structure comprises 208 residues: Small ribosomal subunit protein uS5 (208 aa).

The interval 1–38 (MPGRERRDGGRSADDNQKKNDRRGGRRDDRRNQQQDER) is disordered. The S5 DRBM domain occupies 41–104 (YIERVVTINR…EEARKNFFRV (64 aa)).

Belongs to the universal ribosomal protein uS5 family. As to quaternary structure, part of the 30S ribosomal subunit. Contacts proteins S4 and S8.

Its function is as follows. With S4 and S12 plays an important role in translational accuracy. Functionally, located at the back of the 30S subunit body where it stabilizes the conformation of the head with respect to the body. This chain is Small ribosomal subunit protein uS5, found in Corynebacterium diphtheriae (strain ATCC 700971 / NCTC 13129 / Biotype gravis).